A 336-amino-acid polypeptide reads, in one-letter code: Small ribosomal subunit protein uS9m (336 aa).

Residues 32–81 (STTTTTTTTTTTTTSDEIPTTKPRFQSRFRRNQQPHQQQRSPYTSSQVTE) form a disordered region. Residues 33–45 (TTTTTTTTTTTTT) are compositionally biased toward low complexity. A compositionally biased stretch (polar residues) spans 65 to 81 (QPHQQQRSPYTSSQVTE).

Belongs to the universal ribosomal protein uS9 family. Component of the mitochondrial small ribosomal subunit (mt-SSU).

It is found in the mitochondrion. Component of the mitochondrial ribosome (mitoribosome), a dedicated translation machinery responsible for the synthesis of mitochondrial genome-encoded proteins, including at least some of the essential transmembrane subunits of the mitochondrial respiratory chain. The mitoribosomes are attached to the mitochondrial inner membrane and translation products are cotranslationally integrated into the membrane. This is Small ribosomal subunit protein uS9m (MRPS9) from Candida albicans (strain SC5314 / ATCC MYA-2876) (Yeast).